The sequence spans 101 residues: MLLEHVLVLSAYLFSIGIYGLITSRNMVRALMCLELILNAVNMNFVTFSDFFDKRQLKGDIFSIFVIAIAAAEAAIGSAIVSSIYRNRKSTRINQSTLLNK.

Helical transmembrane passes span 2–22, 32–52, and 61–81; these read LLEH…YGLI, MCLE…SDFF, and IFSI…SAIV.

The protein belongs to the complex I subunit 4L family. NDH is composed of at least 16 different subunits, 5 of which are encoded in the nucleus.

It localises to the plastid. The protein resides in the chloroplast thylakoid membrane. The enzyme catalyses a plastoquinone + NADH + (n+1) H(+)(in) = a plastoquinol + NAD(+) + n H(+)(out). The catalysed reaction is a plastoquinone + NADPH + (n+1) H(+)(in) = a plastoquinol + NADP(+) + n H(+)(out). NDH shuttles electrons from NAD(P)H:plastoquinone, via FMN and iron-sulfur (Fe-S) centers, to quinones in the photosynthetic chain and possibly in a chloroplast respiratory chain. The immediate electron acceptor for the enzyme in this species is believed to be plastoquinone. Couples the redox reaction to proton translocation, and thus conserves the redox energy in a proton gradient. In Carica papaya (Papaya), this protein is NAD(P)H-quinone oxidoreductase subunit 4L, chloroplastic.